A 354-amino-acid polypeptide reads, in one-letter code: MEFSNQLFMITGCPEQYHHKSLKTGLNILTKKSFDKYGGFILFEAKNIPPYYFGHYLRMVSLPSDRPDLIVYESKQSCRSNMVILGEIFLLSTQHTFIMLNDFGLDIKSISAQDRGKWYECIAGSNSDAIKGHFLFQKTCKASDEPNIIDVDDSNKKYKPEINHLDESNILKRAELLTTVTQSLSTGDAKMAGVIINKNDILDDILTLIIKSGNVSAFKTLINIIGLSNDQIFKIIESSFSHNQTKIYEFLESRYPQLYLESSIINGRTDIVDNLVKKGSNPIVVLHKAAECAQFDIIWNLSENSLINQNDIDIAMTIVKQRIHDILFYSDNPDVEKEQDILELLENIKLMRDF.

ANK repeat units follow at residues 201 to 230, 253 to 284, and 286 to 314; these read ILDDILTLIIKSGNVSAFKTLINIIGLSND, SRYPQLYLESSIINGRTDIVDNLVKKGSNPIV, and LHKAAECAQFDIIWNLSENSLINQNDIDI.

The chain is Putative ankyrin repeat protein L284 from Acanthamoeba polyphaga (Amoeba).